A 413-amino-acid polypeptide reads, in one-letter code: uncharacterized protein (413 aa).

Disordered stretches follow at residues E108–S158 and D232–A257. S115 bears the Phosphoserine mark. The segment covering S127–H139 has biased composition (polar residues). The residue at position 141 (S141) is a Phosphoserine. K239 is covalently cross-linked (Glycyl lysine isopeptide (Lys-Gly) (interchain with G-Cter in SUMO2)). Phosphoserine occurs at positions 269 and 296. Positions R290–D336 are disordered. Over residues T302–P318 the composition is skewed to low complexity. S342 carries the post-translational modification Phosphoserine.

This is an uncharacterized protein from Mus musculus (Mouse).